We begin with the raw amino-acid sequence, 246 residues long: Dehydration-responsive element-binding protein 1H (246 aa).

The tract at residues 1–43 (MDMAGHEVNSSSSSSGAESSSSSSGRQQYKKRPAGRTKFRETR) is disordered. Positions 10-24 (SSSSSSGAESSSSSS) are enriched in low complexity. Over residues 28–37 (QYKKRPAGRT) the composition is skewed to basic residues. Residues 46–110 (VYRGVRRRGG…GGGAACLNFQ (65 aa)) constitute a DNA-binding region (AP2/ERF). The tract at residues 155–187 (AMDEATSGVSAPPPLANNAGSSETPGPSSIDGT) is disordered. The span at 172 to 181 (NAGSSETPGP) shows a compositional bias: polar residues.

Belongs to the AP2/ERF transcription factor family. ERF subfamily.

The protein resides in the nucleus. Transcriptional activator that binds specifically to the DNA sequence 5'-[AG]CCGAC-3'. Binding to the C-repeat/DRE element mediates high salinity- and dehydration-inducible transcription. In Oryza sativa subsp. indica (Rice), this protein is Dehydration-responsive element-binding protein 1H (DREB1H).